Consider the following 372-residue polypeptide: DNA replication and repair protein RecF (372 aa).

Residue 30–37 (GANGQGKT) coordinates ATP.

The protein belongs to the RecF family.

Its subcellular location is the cytoplasm. Functionally, the RecF protein is involved in DNA metabolism; it is required for DNA replication and normal SOS inducibility. RecF binds preferentially to single-stranded, linear DNA. It also seems to bind ATP. The polypeptide is DNA replication and repair protein RecF (Heliobacterium modesticaldum (strain ATCC 51547 / Ice1)).